We begin with the raw amino-acid sequence, 270 residues long: Oxidized low-density lipoprotein receptor 1 (270 aa).

Residues Met1 to Asp14 are compositionally biased toward basic and acidic residues. Residues Met1–Ala22 form a disordered region. Topologically, residues Met1–Pro33 are cytoplasmic. The helical; Signal-anchor for type II membrane protein transmembrane segment at Ala34 to Leu56 threads the bilayer. Cys42 carries the S-palmitoyl cysteine lipid modification. The neck stretch occupies residues Ser57–Trp146. At Ser57–Gln270 the chain is on the extracellular side. Asn69 and Asn135 each carry an N-linked (GlcNAc...) asparagine glycan. Residues Arg85–Asn135 adopt a coiled-coil conformation. Disulfide bonds link Cys140/Cys151, Cys168/Cys260, and Cys239/Cys252. The region spanning His147 to Gln261 is the C-type lectin domain.

As to quaternary structure, homodimer; disulfide-linked. May form a hexamer composed of 3 homodimers. Interacts with HSP70. In terms of processing, N-glycosylated. As to expression, highly expressed in endothelial cells, aortic intima and lung. Expressed at low level in other tissues.

It is found in the cell membrane. The protein localises to the membrane raft. It localises to the secreted. Its function is as follows. Receptor that mediates the recognition, internalization and degradation of oxidatively modified low density lipoprotein (oxLDL) by vascular endothelial cells. OxLDL is a marker of atherosclerosis that induces vascular endothelial cell activation and dysfunction, resulting in pro-inflammatory responses, pro-oxidative conditions and apoptosis. Its association with oxLDL induces the activation of NF-kappa-B through an increased production of intracellular reactive oxygen and a variety of pro-atherogenic cellular responses including a reduction of nitric oxide (NO) release, monocyte adhesion and apoptosis. In addition to binding oxLDL, it acts as a receptor for the HSP70 protein involved in antigen cross-presentation to naive T-cells in dendritic cells, thereby participating in cell-mediated antigen cross-presentation. Also involved in inflammatory process, by acting as a leukocyte-adhesion molecule at the vascular interface in endotoxin-induced inflammation. Also acts as a receptor for advanced glycation end (AGE) products, activated platelets, monocytes, apoptotic cells and both Gram-negative and Gram-positive bacteria. The protein is Oxidized low-density lipoprotein receptor 1 (OLR1) of Bos taurus (Bovine).